Reading from the N-terminus, the 197-residue chain is Small ribosomal subunit protein uS4c (197 aa).

The 62-residue stretch at 92–153 folds into the S4 RNA-binding domain; sequence MRLDAVVYRL…APIVEHAKTF (62 aa).

Belongs to the universal ribosomal protein uS4 family. In terms of assembly, part of the 30S ribosomal subunit. Contacts protein S5. The interaction surface between S4 and S5 is involved in control of translational fidelity.

Its subcellular location is the plastid. The protein localises to the chloroplast. One of the primary rRNA binding proteins, it binds directly to 16S rRNA where it nucleates assembly of the body of the 30S subunit. Its function is as follows. With S5 and S12 plays an important role in translational accuracy. This chain is Small ribosomal subunit protein uS4c (rps4), found in Ostreococcus tauri.